Here is a 744-residue protein sequence, read N- to C-terminus: Elongation factor G, mitochondrial (744 aa).

A mitochondrion-targeting transit peptide spans 1–33 (MTISNLIRSRCSLAAAKSFLENVKSFSSHATFA). Residues 39 to 317 (EKIRNIGISA…VLDYLPHPGE (279 aa)) enclose the tr-type G domain. GTP is bound by residues 48–55 (AHIDSGKT), 115–119 (DTPGH), and 169–172 (NKLD).

The protein belongs to the TRAFAC class translation factor GTPase superfamily. Classic translation factor GTPase family. EF-G/EF-2 subfamily.

Its subcellular location is the mitochondrion. The protein operates within protein biosynthesis; polypeptide chain elongation. In terms of biological role, mitochondrial GTPase that catalyzes the GTP-dependent ribosomal translocation step during translation elongation. During this step, the ribosome changes from the pre-translocational (PRE) to the post-translocational (POST) state as the newly formed A-site-bound peptidyl-tRNA and P-site-bound deacylated tRNA move to the P and E sites, respectively. Catalyzes the coordinated movement of the two tRNA molecules, the mRNA and conformational changes in the ribosome. This Anopheles gambiae (African malaria mosquito) protein is Elongation factor G, mitochondrial.